A 175-amino-acid polypeptide reads, in one-letter code: Centrosomal protein 20 (175 aa).

The segment at 1 to 104 (MATIAELKAV…IVEDANGKSV (104 aa)) is necessary and sufficient for homooligomerization and localization to centrosomes and pericentriolar satellites. In terms of domain architecture, LisH spans 49–81 (ENLLINELIREYLEFNKYKYSASVLTAEAGQPE). A disordered region spans residues 137-166 (RQNLAKPSTERNQKDRIPEPGRMAGTSIEE). Over residues 144 to 155 (STERNQKDRIPE) the composition is skewed to basic and acidic residues.

This sequence belongs to the CEP43 family. As to quaternary structure, homooligomer; probably required for localization to centrosomes.

It is found in the cell projection. It localises to the cilium. The protein localises to the cytoplasm. The protein resides in the cytoskeleton. Its subcellular location is the cilium basal body. It is found in the microtubule organizing center. It localises to the centrosome. The protein localises to the cytoplasmic granule. The protein resides in the centriolar satellite. Functionally, involved in the biogenesis of cilia. Required for the recruitment of PLK1 to centrosomes and S phase progression. The chain is Centrosomal protein 20 (CEP20) from Gallus gallus (Chicken).